The following is a 357-amino-acid chain: Protein RecA (357 aa).

67–74 contributes to the ATP binding site; the sequence is GPESSGKT. The disordered stretch occupies residues 334–357; it reads ELKPAAAGNSHDEDELAGEGKEEF.

It belongs to the RecA family.

The protein localises to the cytoplasm. Its function is as follows. Can catalyze the hydrolysis of ATP in the presence of single-stranded DNA, the ATP-dependent uptake of single-stranded DNA by duplex DNA, and the ATP-dependent hybridization of homologous single-stranded DNAs. It interacts with LexA causing its activation and leading to its autocatalytic cleavage. The polypeptide is Protein RecA (Pectobacterium atrosepticum (strain SCRI 1043 / ATCC BAA-672) (Erwinia carotovora subsp. atroseptica)).